We begin with the raw amino-acid sequence, 80 residues long: Small ribosomal subunit protein bS18 (80 aa).

It belongs to the bacterial ribosomal protein bS18 family. As to quaternary structure, part of the 30S ribosomal subunit. Forms a tight heterodimer with protein bS6.

Binds as a heterodimer with protein bS6 to the central domain of the 16S rRNA, where it helps stabilize the platform of the 30S subunit. The protein is Small ribosomal subunit protein bS18 of Methylocella silvestris (strain DSM 15510 / CIP 108128 / LMG 27833 / NCIMB 13906 / BL2).